A 492-amino-acid polypeptide reads, in one-letter code: Alpha/beta hydrolase ucsC (492 aa).

S258 (nucleophile) is an active-site residue.

Belongs to the AB hydrolase superfamily. FUS2 hydrolase family. As to quaternary structure, homodimer.

It participates in mycotoxin biosynthesis. Alpha/beta hydrolase; part of the gene cluster that mediates the biosynthesis of UCS1025A, a member of the pyrrolizidinone family that acts as a strong telomerase inhibitor and displays potent antibacterial and antitumor properties. These compounds share a hemiaminal-containing pyrrolizidinone core fused with a gamma-lactone, giving a furopyrrolizidine that is connected to a decalin fragment. The polyketide synthase module (PKS) of the PKS-NRPS ucsA is responsible for the synthesis of the polyketide backbone via the condensation of an acetyl-CoA starter unit with 6 malonyl-CoA units. The downstream nonribosomal peptide synthetase (NRPS) module then amidates the carboxyl end of the polyketide with a 2S,3S-methylproline derived from L-isoleucine by the 2-oxoglutarate-dependent dioxygenase ucsF which converts L-isoleucine to (4S,5S)-4-methylpyrroline-5-carboxylate that is further converted to 2S,3S-methylproline by the pyrroline-5-carboxylate reductase ucsG. Reductive release of the completed aminoacyl polyketide from the assembly line can form the 3-pyrrolin-2-one structure via an intramolecular Knoevenagel reaction. Because ucsA lacks a designated enoylreductase (ER) domain, the required activity is provided the enoyl reductase ucsL. This keto acyclic precursor is the substrate of the Diels-Alderase ucsH, that catalyzes the Diels-Alder cycloaddition. Oxidation of the 3S-methyl group to a carboxylate by the cytochrome P450 monooxygenase ucsK allows an oxa-Michael cyclization that might involve the reductase/dehydrogenase ucsI and which furnishes the furopyrrolizidine. The oxidase ucsJ likely plays a critical role in stereoselective reduction of the C5-C6 double bond to afford the required R-configured carboxylate group. Further enolization and oxidation at C5 by an unidentified enzyme affords the last intermediate that can undergo oxa-Michael cyclization to yield UCS1025A. The chain is Alpha/beta hydrolase ucsC from Acremonium sp.